The following is a 148-amino-acid chain: Glutamate mutase sigma subunit 2 (148 aa).

The B12-binding domain occupies 1 to 134 (MRTVILGVIG…EALKADLGHR (134 aa)). Adenosylcob(III)alamin contacts are provided by residues 11–15 (SDAHV), histidine 14, 59–61 (SSL), and 90–94 (NLAVG). The span at 129-141 (ADLGHRSREEASS) shows a compositional bias: basic and acidic residues. The interval 129–148 (ADLGHRSREEASSEKVQLGS) is disordered.

The protein belongs to the methylaspartate mutase GlmS subunit family. Heterotetramer composed of 2 epsilon subunits (GlmE) and 2 sigma subunits (GlmS). GlmE exists as a homodimer and GlmS as a monomer. The cofactor is adenosylcob(III)alamin.

The enzyme catalyses (2S,3S)-3-methyl-L-aspartate = L-glutamate. It participates in amino-acid degradation; L-glutamate degradation via mesaconate pathway; acetate and pyruvate from L-glutamate: step 1/4. Catalyzes the carbon skeleton rearrangement of L-glutamate to L-threo-3-methylaspartate ((2S,3S)-3-methylaspartate). The protein is Glutamate mutase sigma subunit 2 of Haloarcula marismortui (strain ATCC 43049 / DSM 3752 / JCM 8966 / VKM B-1809) (Halobacterium marismortui).